The sequence spans 333 residues: Homeobox protein engrailed-1 (333 aa).

Positions Met-1–Ala-14 are enriched in basic and acidic residues. Disordered regions lie at residues Met-1–Tyr-184 and Arg-226–Pro-247. Residues Ala-20–Asp-31 show a composition bias toward gly residues. Residues Ser-38–Arg-66 are compositionally biased toward pro residues. Positions Thr-94–Gly-104 are enriched in gly residues. Residues Asp-144 to Gln-173 are compositionally biased toward low complexity. A DNA-binding region (homeobox) is located at residues Asp-244–Thr-303.

The protein belongs to the engrailed homeobox family.

The protein localises to the nucleus. Functionally, required for proper formation of the apical ectodermal ridge and correct dorsal-ventral patterning in the limb. This chain is Homeobox protein engrailed-1 (EN1), found in Gallus gallus (Chicken).